The primary structure comprises 104 residues: N(4)-acetylcytidine amidohydrolase (104 aa).

Residues 6 to 94 form the ASCH domain; the sequence is ITFFQRFQND…IAEIYPNQTQ (89 aa). Lys-21 functions as the Proton acceptor in the catalytic mechanism. Thr-24 acts as the Nucleophile in catalysis. The active-site Proton donor is Glu-74.

Belongs to the N(4)-acetylcytidine amidohydrolase family.

The enzyme catalyses N(4)-acetylcytidine + H2O = cytidine + acetate + H(+). It catalyses the reaction N(4)-acetyl-2'-deoxycytidine + H2O = 2'-deoxycytidine + acetate + H(+). It carries out the reaction N(4)-acetylcytosine + H2O = cytosine + acetate + H(+). In terms of biological role, catalyzes the hydrolysis of N(4)-acetylcytidine (ac4C). The sequence is that of N(4)-acetylcytidine amidohydrolase (yqfB) from Salmonella dublin (strain CT_02021853).